A 2082-amino-acid chain; its full sequence is Polyketide synthase ThaQ (2082 aa).

Residues 398–468 (NDARRAGSAR…DSAHDSAHAA (71 aa)) are disordered. Composition is skewed to basic and acidic residues over residues 399 to 411 (DARRAGSARRDAR), 419 to 430 (HGARHEAAHDAQ), and 439 to 468 (ADAHDSAHDSAHDSAHDSAHDSAHDSAHAA). A Carrier 1 domain is found at 470–546 (ALRREGRAYL…ALLDHLLAAH (77 aa)). Residue Ser507 is modified to O-(pantetheine 4'-phosphoryl)serine. 2 stretches are compositionally biased toward low complexity: residues 560–582 (APARGVGARAQAAQASGEGRAAP) and 593–605 (DTPSSAPSSAPAR). Residues 560–655 (APARGVGARA…RYAPRAPHPD (96 aa)) are disordered. A compositionally biased stretch (pro residues) spans 606-631 (PDQPAPSGPPAQPAQPAPRADTPPPA). Positions 658-1077 (AEPVAIIGIS…GVNAHVVLEE (420 aa)) constitute a Ketosynthase family 3 (KS3) domain. Disordered regions lie at residues 1250–1269 (APGTRHASAGEATEAAEAAE) and 1603–1653 (ARGP…VKSD). 2 stretches are compositionally biased toward low complexity: residues 1256–1269 (ASAGEATEAAEAAE) and 1612–1624 (SPDAQPPAARAQA). Basic and acidic residues predominate over residues 1640 to 1653 (ADSKAGPKSEVKSD). The region spanning 1669-1743 (ASVAASVEDA…ALVRAVAEAV (75 aa)) is the Carrier 2 domain. An O-(pantetheine 4'-phosphoryl)serine modification is found at Ser1703. Residues 1792–2022 (PRVVLIPGLG…GAGHAVFLTH (231 aa)) form the AB hydrolase-1 domain. A compositionally biased stretch (low complexity) spans 2045–2067 (GAAESVESVEATEAAEAARSPAV). A disordered region spans residues 2045 to 2082 (GAAESVESVEATEAAEAARSPAVARRRATDDAPVGSDA).

It depends on pantetheine 4'-phosphate as a cofactor.

The protein localises to the cytoplasm. Its pathway is antibiotic biosynthesis. Its function is as follows. Involved in production of the polyketide antibiotic thailandamide. This is Polyketide synthase ThaQ from Burkholderia thailandensis (strain ATCC 700388 / DSM 13276 / CCUG 48851 / CIP 106301 / E264).